The following is a 200-amino-acid chain: Lipopolysaccharide core heptose(II)-phosphate phosphatase (200 aa).

A signal peptide spans 1 to 25 (MLAFCRSSLKSKKYFIILLALAAIA).

Belongs to the phosphoglycerate mutase family. Ais subfamily.

The protein localises to the periplasm. The protein operates within bacterial outer membrane biogenesis; lipopolysaccharide metabolism. In terms of biological role, catalyzes the dephosphorylation of heptose(II) of the outer membrane lipopolysaccharide core. The polypeptide is Lipopolysaccharide core heptose(II)-phosphate phosphatase (Escherichia coli O17:K52:H18 (strain UMN026 / ExPEC)).